The chain runs to 99 residues: Probable small ribosomal subunit protein cS23 (99 aa).

It belongs to the chloroplast-specific ribosomal protein cS23 family. Part of the 30S ribosomal subunit.

In terms of biological role, probably a ribosomal protein or a ribosome-associated protein. This Synechococcus sp. (strain JA-2-3B'a(2-13)) (Cyanobacteria bacterium Yellowstone B-Prime) protein is Probable small ribosomal subunit protein cS23.